We begin with the raw amino-acid sequence, 357 residues long: Arginine kinase Cal b 2.0101 (357 aa).

The region spanning 9–91 (KLEEGFKKLE…FDPIIEDYHK (83 aa)) is the Phosphagen kinase N-terminal domain. Residue 64–68 (GVGVY) coordinates L-arginine. The 238-residue stretch at 119–356 (FVISTRVRCG…LELIKIEKEM (238 aa)) folds into the Phosphagen kinase C-terminal domain. ATP is bound by residues 122–126 (STRVR) and His-185. The cysteines at positions 201 and 271 are disulfide-linked. Glu-225 serves as a coordination point for L-arginine. Residue Arg-229 coordinates ATP. An L-arginine-binding site is contributed by Cys-271. ATP is bound by residues 280–284 (RASVH) and 309–314 (RGTRGE). Glu-314 is an L-arginine binding site.

It belongs to the ATP:guanido phosphotransferase family. In terms of tissue distribution, expressed in chela muscle (at protein level). Expressed in muscle.

The enzyme catalyses L-arginine + ATP = N(omega)-phospho-L-arginine + ADP + H(+). In terms of biological role, catalyzes the reversible transfer of high energy ATP gamma-phosphate group to L-arginine. This is Arginine kinase Cal b 2.0101 from Callinectes bellicosus (Warrior swimming crab).